Here is a 511-residue protein sequence, read N- to C-terminus: N-acetylgalactosamine-6-O-sulfatase (511 aa).

Ser-83 carries the 3-oxoalanine (Ser) modification.

It belongs to the sulfatase family. Post-translationally, the conversion to 3-oxoalanine (also known as C-formylglycine, FGly), of a serine or cysteine residue in prokaryotes and of a cysteine residue in eukaryotes, is critical for catalytic activity.

Its function is as follows. Exosulfatase involved in the degradation of the glycosaminoglycans (GAGs) chondroitin sulfate (CS) and dermatan sulfate (DS). Catalyzes the hydrolysis of the 6-sulfate groups of the N-acetyl-D-galactosamine 6-sulfate units. GAG-specific sulfatases play a key role in the persistence of the major human gut symbiont B.thetaiotaomicron in the host gastrointestinal tract. The sequence is that of N-acetylgalactosamine-6-O-sulfatase from Bacteroides thetaiotaomicron (strain ATCC 29148 / DSM 2079 / JCM 5827 / CCUG 10774 / NCTC 10582 / VPI-5482 / E50).